We begin with the raw amino-acid sequence, 420 residues long: D-tagatose-1,6-bisphosphate aldolase subunit GatZ (420 aa).

Belongs to the GatZ/KbaZ family. GatZ subfamily. Forms a complex with GatY.

It participates in carbohydrate metabolism; D-tagatose 6-phosphate degradation; D-glyceraldehyde 3-phosphate and glycerone phosphate from D-tagatose 6-phosphate: step 2/2. Its function is as follows. Component of the tagatose-1,6-bisphosphate aldolase GatYZ that is required for full activity and stability of the Y subunit. Could have a chaperone-like function for the proper and stable folding of GatY. When expressed alone, GatZ does not show any aldolase activity. Is involved in the catabolism of galactitol. This chain is D-tagatose-1,6-bisphosphate aldolase subunit GatZ, found in Escherichia coli O8 (strain IAI1).